Reading from the N-terminus, the 279-residue chain is NH(3)-dependent NAD(+) synthetase (279 aa).

46 to 53 (GISGGQDS) is a binding site for ATP. Asp-52 lines the Mg(2+) pocket. Position 145 (Arg-145) interacts with deamido-NAD(+). ATP is bound at residue Thr-165. Glu-170 serves as a coordination point for Mg(2+). 2 residues coordinate deamido-NAD(+): Lys-178 and Asp-185. 2 residues coordinate ATP: Lys-194 and Thr-216. Position 265–266 (265–266 (HK)) interacts with deamido-NAD(+).

The protein belongs to the NAD synthetase family. As to quaternary structure, homodimer.

It carries out the reaction deamido-NAD(+) + NH4(+) + ATP = AMP + diphosphate + NAD(+) + H(+). Its pathway is cofactor biosynthesis; NAD(+) biosynthesis; NAD(+) from deamido-NAD(+) (ammonia route): step 1/1. In terms of biological role, catalyzes the ATP-dependent amidation of deamido-NAD to form NAD. Uses ammonia as a nitrogen source. The polypeptide is NH(3)-dependent NAD(+) synthetase (Rhodococcus opacus (strain B4)).